The primary structure comprises 144 residues: Large ribosomal subunit protein uL16 (144 aa).

Belongs to the universal ribosomal protein uL16 family. In terms of assembly, part of the 50S ribosomal subunit.

Binds 23S rRNA and is also seen to make contacts with the A and possibly P site tRNAs. In Enterococcus faecalis (strain ATCC 700802 / V583), this protein is Large ribosomal subunit protein uL16.